Here is a 1420-residue protein sequence, read N- to C-terminus: DNA-directed RNA polymerase subunit beta' (1420 aa).

The Zn(2+) site is built by Cys71, Cys73, Cys86, and Cys89. Mg(2+)-binding residues include Asp461, Asp463, and Asp465. Zn(2+) contacts are provided by Cys815, Cys889, Cys896, and Cys899.

Belongs to the RNA polymerase beta' chain family. In terms of assembly, the RNAP catalytic core consists of 2 alpha, 1 beta, 1 beta' and 1 omega subunit. When a sigma factor is associated with the core the holoenzyme is formed, which can initiate transcription. It depends on Mg(2+) as a cofactor. The cofactor is Zn(2+).

It carries out the reaction RNA(n) + a ribonucleoside 5'-triphosphate = RNA(n+1) + diphosphate. Functionally, DNA-dependent RNA polymerase catalyzes the transcription of DNA into RNA using the four ribonucleoside triphosphates as substrates. The sequence is that of DNA-directed RNA polymerase subunit beta' from Histophilus somni (strain 2336) (Haemophilus somnus).